Consider the following 259-residue polypeptide: Phosphate import ATP-binding protein PstB (259 aa).

The ABC transporter domain maps to 10 to 254 (AESRNLSFYY…PSRKETEDYI (245 aa)). 43–50 (GPSGCGKS) lines the ATP pocket.

The protein belongs to the ABC transporter superfamily. Phosphate importer (TC 3.A.1.7) family. The complex is composed of two ATP-binding proteins (PstB), two transmembrane proteins (PstC and PstA) and a solute-binding protein (PstS).

The protein resides in the cell inner membrane. It carries out the reaction phosphate(out) + ATP + H2O = ADP + 2 phosphate(in) + H(+). Functionally, part of the ABC transporter complex PstSACB involved in phosphate import. Responsible for energy coupling to the transport system. In Methylobacillus flagellatus (strain ATCC 51484 / DSM 6875 / VKM B-1610 / KT), this protein is Phosphate import ATP-binding protein PstB.